A 263-amino-acid chain; its full sequence is Hydroxyacylglutathione hydrolase (263 aa).

7 residues coordinate Zn(2+): His-55, His-57, Asp-59, His-60, His-117, Asp-134, and His-172.

The protein belongs to the metallo-beta-lactamase superfamily. Glyoxalase II family. Monomer. Zn(2+) is required as a cofactor.

The enzyme catalyses an S-(2-hydroxyacyl)glutathione + H2O = a 2-hydroxy carboxylate + glutathione + H(+). It participates in secondary metabolite metabolism; methylglyoxal degradation; (R)-lactate from methylglyoxal: step 2/2. Thiolesterase that catalyzes the hydrolysis of S-D-lactoyl-glutathione to form glutathione and D-lactic acid. The sequence is that of Hydroxyacylglutathione hydrolase from Shewanella baltica (strain OS185).